A 212-amino-acid polypeptide reads, in one-letter code: Peptide methionine sulfoxide reductase MsrA (212 aa).

Residue Cys52 is part of the active site.

It belongs to the MsrA Met sulfoxide reductase family.

The enzyme catalyses L-methionyl-[protein] + [thioredoxin]-disulfide + H2O = L-methionyl-(S)-S-oxide-[protein] + [thioredoxin]-dithiol. It catalyses the reaction [thioredoxin]-disulfide + L-methionine + H2O = L-methionine (S)-S-oxide + [thioredoxin]-dithiol. Functionally, has an important function as a repair enzyme for proteins that have been inactivated by oxidation. Catalyzes the reversible oxidation-reduction of methionine sulfoxide in proteins to methionine. The protein is Peptide methionine sulfoxide reductase MsrA of Escherichia coli (strain SMS-3-5 / SECEC).